Here is a 178-residue protein sequence, read N- to C-terminus: CDP-archaeol synthase (178 aa).

A run of 5 helical transmembrane segments spans residues 3-23 (LLLL…ANAV), 56-76 (FFGI…VILY), 91-111 (IILG…GSFI), 123-143 (APLL…YPLY), and 149-169 (LMVI…IIAY).

It belongs to the CDP-archaeol synthase family. It depends on Mg(2+) as a cofactor.

The protein resides in the cell membrane. The enzyme catalyses 2,3-bis-O-(geranylgeranyl)-sn-glycerol 1-phosphate + CTP + H(+) = CDP-2,3-bis-O-(geranylgeranyl)-sn-glycerol + diphosphate. It participates in membrane lipid metabolism; glycerophospholipid metabolism. Functionally, catalyzes the formation of CDP-2,3-bis-(O-geranylgeranyl)-sn-glycerol (CDP-archaeol) from 2,3-bis-(O-geranylgeranyl)-sn-glycerol 1-phosphate (DGGGP) and CTP. This reaction is the third ether-bond-formation step in the biosynthesis of archaeal membrane lipids. This Methanococcus maripaludis (strain C7 / ATCC BAA-1331) protein is CDP-archaeol synthase.